The chain runs to 209 residues: Mitochondrial import inner membrane translocase subunit Tim23 (209 aa).

The next 3 helical transmembrane spans lie at 73–93, 125–145, and 181–197; these read FELAFFTIGGCCMTGAAFGAM, ALWANTLGSLALLYSAFGVII, and GLAGLTLTSLYALYNNW.

This sequence belongs to the Tim17/Tim22/Tim23 family. As to quaternary structure, component of the TIM23 complex at least composed of TIMM23, TIMM17 (TIMM17A or TIMM17B) and TIMM50; within this complex, directly interacts with TIMM50. The complex interacts with the TIMM44 component of the PAM complex and with DNAJC15. Upon mitochondrial depolarization, interacts with PINK1; the interaction is required for PINK1 accumulation at the outer mitochondrial membrane, kinase activation by autophosphorylation and PRKN recruitement to mitochondria.

It is found in the mitochondrion inner membrane. Functionally, essential component of the TIM23 complex, a complex that mediates the translocation of transit peptide-containing proteins across the mitochondrial inner membrane. Has a role in the activation of stress-induced mitophagy by protecting PINK1 from OMA1-mediated degradation and facilitating its accumulation at the outer mitochondrial membrane in response to depolarization. This chain is Mitochondrial import inner membrane translocase subunit Tim23 (Timm23), found in Mus musculus (Mouse).